The chain runs to 218 residues: MSNLSPEAIKVRNALVEKGIETPMIDLVQDKDQRRQGIEQHMREVIKLIGLDLSDDSLEETPARLSKMFIDEIFSGLDYANFPKITNIENRMKVSEMVLVDDVTLTSTCEHHFVTIDGKVSVAYYPQKWVIGLSKINRVVAFFAQRPQVQERLTQQILLAFQTILETEDVAVYVKATHFCVKCRGIKDTNSYTVTSAFGGVFLDDRETRKEFLTLLKK.

Zn(2+)-binding residues include Cys-109, His-112, and Cys-180.

The protein belongs to the GTP cyclohydrolase I family. In terms of assembly, toroid-shaped homodecamer, composed of two pentamers of five dimers.

The catalysed reaction is GTP + H2O = 7,8-dihydroneopterin 3'-triphosphate + formate + H(+). The protein operates within cofactor biosynthesis; 7,8-dihydroneopterin triphosphate biosynthesis; 7,8-dihydroneopterin triphosphate from GTP: step 1/1. The protein is GTP cyclohydrolase 1 of Histophilus somni (strain 129Pt) (Haemophilus somnus).